A 944-amino-acid polypeptide reads, in one-letter code: Translation factor GUF1 homolog, mitochondrial (944 aa).

A tr-type G domain is found at 201-379; sequence KNVRNFCILA…IITDIPYPPI (179 aa). GTP is bound by residues 210–217, 271–275, and 325–328; these read AHIDSGKS, DTPGH, and NKID.

This sequence belongs to the TRAFAC class translation factor GTPase superfamily. Classic translation factor GTPase family. LepA subfamily.

It localises to the mitochondrion inner membrane. It carries out the reaction GTP + H2O = GDP + phosphate + H(+). Its function is as follows. Promotes mitochondrial protein synthesis. May act as a fidelity factor of the translation reaction, by catalyzing a one-codon backward translocation of tRNAs on improperly translocated ribosomes. Binds to mitochondrial ribosomes in a GTP-dependent manner. The sequence is that of Translation factor GUF1 homolog, mitochondrial from Plasmodium yoelii yoelii.